A 360-amino-acid polypeptide reads, in one-letter code: Photosystem II protein D1 1 (360 aa).

Topologically, residues 2–31 are cytoplasmic; sequence TTTLQRRESANLWERFCNWVTSTDNRLYVG. A helical transmembrane segment spans residues 32 to 53; the sequence is WFGVIMIPTLLAATICFVIAFI. The Lumenal segment spans residues 54–110; it reads AAPPVDIDGIREPVSGSLLYGNNIITGAVVPSSNAIGLHFYPIWEAASLDEWLYNGG. The helical transmembrane segment at 111–132 threads the bilayer; it reads PYQLIIFHFLLGASCYMGRQWE. Residue H118 participates in chlorophyll a binding. 2 residues coordinate pheophytin a: Y126 and Q130. Over 133–142 the chain is Cytoplasmic; the sequence is LSYRLGMRPW. A helical membrane pass occupies residues 143-163; sequence ICVAYSAPLASAFAVFLIYPI. Y147 is a binding site for pheophytin a. At 164–191 the chain is on the lumenal side; sequence GQGSFSDGMPLGISGTFNFMIVFQAEHN. [CaMn4O5] cluster contacts are provided by D170 and E189. A helical membrane pass occupies residues 192 to 217; sequence ILMHPFHQLGVAGVFGGALFCAMHGS. Residue H198 participates in chlorophyll a binding. A quinone contacts are provided by residues H215 and 264-265; that span reads SF. H215 is a Fe cation binding site. Residues 218–272 lie on the Cytoplasmic side of the membrane; the sequence is LVTSSLIRETTETESANYGYKFGQEEETYNIVAAHGYFGRLIFQYASFNNSRSLH. H272 contacts Fe cation. A helical membrane pass occupies residues 273–295; sequence FFLAAWPVVGVWFTALGISTMAF. Residues 296–344 lie on the Lumenal side of the membrane; the sequence is NLNGFNFNHSVIDAKGNVINTWADIINRANLGMEVMHERNAHNFPLDLA. Residues H332, E333, D342, and A344 each contribute to the [CaMn4O5] cluster site. The propeptide occupies 345–360; the sequence is SAESAPVAMIAPSING.

Belongs to the reaction center PufL/M/PsbA/D family. As to quaternary structure, PSII is composed of 1 copy each of membrane proteins PsbA, PsbB, PsbC, PsbD, PsbE, PsbF, PsbH, PsbI, PsbJ, PsbK, PsbL, PsbM, PsbT, PsbX, PsbY, PsbZ, Psb30/Ycf12, peripheral proteins PsbO, CyanoQ (PsbQ), PsbU, PsbV and a large number of cofactors. It forms dimeric complexes. Precursor protein interacts with Ycf48. Part of a photosystem II (PSII) assembly intermediate complex PSII-I; crystallized from a strain deleted of psbJ, it forms monomeric PSII before addition of the oxygen evolving complex. PSII-I includes 3 assembly factors not found in mature PSII (Psb27, Psb28 and Psb34). In PSII-I the C-terminus of D1 (this subunit) is already processed but not yet found at its final position. Requires The D1/D2 heterodimer binds P680, chlorophylls that are the primary electron donor of PSII, and subsequent electron acceptors. It shares a non-heme iron and each subunit binds pheophytin, quinone, additional chlorophylls, carotenoids and lipids. D1 provides most of the ligands for the Mn4-Ca-O5 cluster of the oxygen-evolving complex (OEC). There is also a Cl(-1) ion associated with D1 and D2, which is required for oxygen evolution. PSII binds additional chlorophylls, carotenoids and specific lipids. as cofactor. Post-translationally, C-terminally processed by CtpA; processing is essential to allow assembly of the oxygen-evolving complex and thus photosynthetic growth. In terms of processing, tyr-161 forms a radical intermediate that is referred to as redox-active TyrZ, YZ or Y-Z.

The protein localises to the cellular thylakoid membrane. The enzyme catalyses 2 a plastoquinone + 4 hnu + 2 H2O = 2 a plastoquinol + O2. Its function is as follows. Photosystem II (PSII) is a light-driven water:plastoquinone oxidoreductase that uses light energy to abstract electrons from H(2)O, generating O(2) and a proton gradient subsequently used for ATP formation. It consists of a core antenna complex that captures photons, and an electron transfer chain that converts photonic excitation into a charge separation. The D1/D2 (PsbA/PsbD) reaction center heterodimer binds P680, the primary electron donor of PSII as well as several subsequent electron acceptors. The protein is Photosystem II protein D1 1 of Thermosynechococcus vestitus (strain NIES-2133 / IAM M-273 / BP-1).